We begin with the raw amino-acid sequence, 296 residues long: (+)-neomenthol dehydrogenase (296 aa).

16–40 (RGIGFEICRQLASEGIRVVLTSRDE) provides a ligand contact to NADP(+). Ser-164 provides a ligand contact to substrate. Residue Tyr-220 is the Proton acceptor of the active site.

It belongs to the short-chain dehydrogenases/reductases (SDR) family. Monomer.

It is found in the cytoplasm. The catalysed reaction is (+)-neomenthol + NADP(+) = (1R,4S)-menthone + NADPH + H(+). Aldehyde reductase that catalyzes the reduction of the aldehyde carbonyl groups on saturated and alpha,beta-unsaturated aldehydes with more than 5 carbons. Involved in basal resistance against pathogens. The sequence is that of (+)-neomenthol dehydrogenase (SDR1) from Arabidopsis thaliana (Mouse-ear cress).